The following is a 621-amino-acid chain: Chaperone protein HscA homolog (621 aa).

The protein belongs to the heat shock protein 70 family.

Functionally, chaperone involved in the maturation of iron-sulfur cluster-containing proteins. Has a low intrinsic ATPase activity which is markedly stimulated by HscB. The chain is Chaperone protein HscA homolog from Cupriavidus necator (strain ATCC 17699 / DSM 428 / KCTC 22496 / NCIMB 10442 / H16 / Stanier 337) (Ralstonia eutropha).